Here is a 229-residue protein sequence, read N- to C-terminus: Heptaprenylglyceryl phosphate synthase (229 aa).

Residue K12 participates in sn-glycerol 1-phosphate binding. D14 and S40 together coordinate Mg(2+). Sn-glycerol 1-phosphate-binding positions include 159-164 (YLEYSG), G189, and 209-210 (GN).

Belongs to the GGGP/HepGP synthase family. Group I subfamily. In terms of assembly, homodimer. Mg(2+) serves as cofactor.

The catalysed reaction is sn-glycerol 1-phosphate + all-trans-heptaprenyl diphosphate = 3-heptaprenyl-sn-glycero-1-phosphate + diphosphate. It functions in the pathway membrane lipid metabolism; glycerophospholipid metabolism. Its function is as follows. Prenyltransferase that catalyzes in vivo the transfer of the heptaprenyl moiety of heptaprenyl pyrophosphate (HepPP; 35 carbon atoms) to the C3 hydroxyl of sn-glycerol-1-phosphate (G1P), producing heptaprenylglyceryl phosphate (HepGP). This reaction is an ether-bond-formation step in the biosynthesis of archaea-type G1P-based membrane lipids found in Bacillales. This Bacillus cereus (strain AH187) protein is Heptaprenylglyceryl phosphate synthase.